A 211-amino-acid polypeptide reads, in one-letter code: Mitotic spindle assembly checkpoint protein MAD2B (211 aa).

One can recognise an HORMA domain in the interval 13–203 (QVVADVLCEF…SDILKMQLYV (191 aa)). A mediates interaction with REV1 and REV3L and homodimerization region spans residues 21–155 (EFLEVAVHLI…FTVLVHTREA (135 aa)). A mediates interaction with ipaB region spans residues 150-211 (VHTREAATRN…YVEERAHKGS (62 aa)).

In terms of assembly, homooligomer. Heterodimer with REV3L. This dimer forms the minimal DNA polymerase zeta complex (Pol-zeta2), with REV3L bearing DNA polymerase catalytic activity, although its activity is very low in this context. Component of the tetrameric Pol-zeta complex (Pol-zeta4), which consists of REV3L, MAD2L2, POLD2 and POLD3; Pol-zeta4 is the fully active form of DNA polymerase zeta. Component of the shieldin complex, consisting of SHLD1, SHLD2, SHLD3 and MAD2L2/REV7. Within the complex, SHLD2 forms a scaffold which interacts with a SHLD3-MAD2L2 subcomplex via its N-terminus, and with SHLD1 via its C-terminus. Interacts with REV1. Interacts with ADAM9. Interacts with CHAMP1. Interacts with FZR1 (in complex with the anaphase promoting complex APC). Interacts with CDC20; PubMed:11459825 could not detect the interaction. Interacts with RAN. Interacts with ELK1; the interaction is direct and recruits MAD2L2 to ELK1-specific promoters. May interact with the JNK kinases MAPK8 and/or MAPK9 to stimulate ELK1 phosphorylation and transcriptional activity upon DNA damage. Interacts with TCF7L2; prevents its binding to promoters and negatively modulates its transcriptional activity. Interacts with YY1AP1. Interacts with S.flexneri protein ipaB; prevents the interaction of MAD2L2 with FZR1 and CDC20 resulting in an activation of the anaphase-promoting complex APC and a cell cycle arrest. Interacts with PRCC; the interaction is direct. Interacts with POGZ. Interacts with ASTE1. Ubiquitously expressed.

It localises to the nucleus. It is found in the cytoplasm. The protein localises to the cytoskeleton. Its subcellular location is the spindle. The protein resides in the chromosome. Adapter protein able to interact with different proteins and involved in different biological processes. Mediates the interaction between the error-prone DNA polymerase zeta catalytic subunit REV3L and the inserter polymerase REV1, thereby mediating the second polymerase switching in translesion DNA synthesis. Translesion DNA synthesis releases the replication blockade of replicative polymerases, stalled in presence of DNA lesions. Component of the shieldin complex, which plays an important role in repair of DNA double-stranded breaks (DSBs). During G1 and S phase of the cell cycle, the complex functions downstream of TP53BP1 to promote non-homologous end joining (NHEJ) and suppress DNA end resection. Mediates various NHEJ-dependent processes including immunoglobulin class-switch recombination, and fusion of unprotected telomeres. May also regulate another aspect of cellular response to DNA damage through regulation of the JNK-mediated phosphorylation and activation of the transcriptional activator ELK1. Inhibits the FZR1- and probably CDC20-mediated activation of the anaphase promoting complex APC thereby regulating progression through the cell cycle. Regulates TCF7L2-mediated gene transcription and may play a role in epithelial-mesenchymal transdifferentiation. The protein is Mitotic spindle assembly checkpoint protein MAD2B (MAD2L2) of Homo sapiens (Human).